The sequence spans 765 residues: Periplasmic beta-glucosidase (765 aa).

An N-terminal signal peptide occupies residues Met1 to Ala20. Asp287 is an active-site residue.

The protein belongs to the glycosyl hydrolase 3 family.

The protein resides in the periplasm. The enzyme catalyses Hydrolysis of terminal, non-reducing beta-D-glucosyl residues with release of beta-D-glucose.. This chain is Periplasmic beta-glucosidase (bglX), found in Escherichia coli (strain K12).